Reading from the N-terminus, the 209-residue chain is Small ribosomal subunit protein uS3 (209 aa).

Residues 38–107 (IRKIIKNKYY…RVVINIEEIK (70 aa)) enclose the KH type-2 domain.

Belongs to the universal ribosomal protein uS3 family. Part of the 30S ribosomal subunit. Forms a tight complex with proteins S10 and S14.

Functionally, binds the lower part of the 30S subunit head. Binds mRNA in the 70S ribosome, positioning it for translation. This chain is Small ribosomal subunit protein uS3, found in Thermotoga maritima (strain ATCC 43589 / DSM 3109 / JCM 10099 / NBRC 100826 / MSB8).